Consider the following 307-residue polypeptide: Ribosomal protein L11 methyltransferase (307 aa).

S-adenosyl-L-methionine contacts are provided by threonine 144, glycine 165, aspartate 187, and asparagine 235.

It belongs to the methyltransferase superfamily. PrmA family.

It localises to the cytoplasm. The catalysed reaction is L-lysyl-[protein] + 3 S-adenosyl-L-methionine = N(6),N(6),N(6)-trimethyl-L-lysyl-[protein] + 3 S-adenosyl-L-homocysteine + 3 H(+). In terms of biological role, methylates ribosomal protein L11. The polypeptide is Ribosomal protein L11 methyltransferase (Psychrobacter sp. (strain PRwf-1)).